The chain runs to 466 residues: 23S rRNA (uracil(1939)-C(5))-methyltransferase RlmD (466 aa).

The TRAM domain occupies 1-54 (MVDVLNIESLDLEARGIAHRDGKVLFVEGALPGERVTVQTVRRKPSYEIAKVEE). Positions 67, 73, 76, and 155 each coordinate [4Fe-4S] cluster. 6 residues coordinate S-adenosyl-L-methionine: Q264, F293, N298, E314, N342, and D363. The active-site Nucleophile is the C393.

It belongs to the class I-like SAM-binding methyltransferase superfamily. RNA M5U methyltransferase family. RlmD subfamily.

It carries out the reaction uridine(1939) in 23S rRNA + S-adenosyl-L-methionine = 5-methyluridine(1939) in 23S rRNA + S-adenosyl-L-homocysteine + H(+). In terms of biological role, catalyzes the formation of 5-methyl-uridine at position 1939 (m5U1939) in 23S rRNA. This is 23S rRNA (uracil(1939)-C(5))-methyltransferase RlmD from Bordetella parapertussis (strain 12822 / ATCC BAA-587 / NCTC 13253).